Consider the following 239-residue polypeptide: Uridylate kinase (239 aa).

13–16 (KLSG) lines the ATP pocket. Glycine 55 serves as a coordination point for UMP. Positions 56 and 60 each coordinate ATP. UMP is bound by residues aspartate 75 and 136–143 (TGNPFFTT). Positions 163, 164, 169, and 172 each coordinate ATP.

This sequence belongs to the UMP kinase family. Homohexamer.

The protein localises to the cytoplasm. The catalysed reaction is UMP + ATP = UDP + ADP. Its pathway is pyrimidine metabolism; CTP biosynthesis via de novo pathway; UDP from UMP (UMPK route): step 1/1. Its activity is regulated as follows. Inhibited by UTP. Functionally, catalyzes the reversible phosphorylation of UMP to UDP. This is Uridylate kinase from Neisseria meningitidis serogroup A / serotype 4A (strain DSM 15465 / Z2491).